Consider the following 419-residue polypeptide: UDP-N-acetylglucosamine 1-carboxyvinyltransferase (419 aa).

A phosphoenolpyruvate-binding site is contributed by 22-23 (KN). R91 is a binding site for UDP-N-acetyl-alpha-D-glucosamine. The active-site Proton donor is C115. A 2-(S-cysteinyl)pyruvic acid O-phosphothioketal modification is found at C115. UDP-N-acetyl-alpha-D-glucosamine-binding positions include 120–124 (RPVDL), 160–163 (KVSV), D305, and I327.

Belongs to the EPSP synthase family. MurA subfamily.

It is found in the cytoplasm. It carries out the reaction phosphoenolpyruvate + UDP-N-acetyl-alpha-D-glucosamine = UDP-N-acetyl-3-O-(1-carboxyvinyl)-alpha-D-glucosamine + phosphate. It participates in cell wall biogenesis; peptidoglycan biosynthesis. Its function is as follows. Cell wall formation. Adds enolpyruvyl to UDP-N-acetylglucosamine. The polypeptide is UDP-N-acetylglucosamine 1-carboxyvinyltransferase (Klebsiella pneumoniae (strain 342)).